Consider the following 62-residue polypeptide: Calmodulin regulator protein PCP4 (62 aa).

A disordered region spans residues 1-39; it reads MSERQGAGATNGKDKTSGENDGQKKVQEEFDIDMDAPET. Residues 12-28 are compositionally biased toward basic and acidic residues; the sequence is GKDKTSGENDGQKKVQE. The tract at residues 28–40 is acidic; binds calcium and is required for modulating the calcium-binding kinetics of calmodulin; sequence EEFDIDMDAPETE. The 24-residue stretch at 39-62 folds into the IQ domain; it reads TERAAVAIQSQFRKFQKKKAGSQS.

Belongs to the PCP4 family. In terms of assembly, binds to both calcium-free and calcium-bound calmodulin. The affinity for the calcium-bound form is 50-fold greater.

Its function is as follows. Functions as a modulator of calcium-binding by calmodulin. Thereby, regulates calmodulin activity and the different processes it controls. For instance, may play a role in neuronal differentiation through activation of calmodulin-dependent kinase signaling pathways. The chain is Calmodulin regulator protein PCP4 from Homo sapiens (Human).